We begin with the raw amino-acid sequence, 233 residues long: 7-cyano-7-deazaguanine synthase (233 aa).

11 to 21 contacts ATP; that stretch reads LSGGLDSSTVL. Residues C195, C203, C206, and C209 each contribute to the Zn(2+) site.

This sequence belongs to the QueC family. It depends on Zn(2+) as a cofactor.

It carries out the reaction 7-carboxy-7-deazaguanine + NH4(+) + ATP = 7-cyano-7-deazaguanine + ADP + phosphate + H2O + H(+). Its pathway is purine metabolism; 7-cyano-7-deazaguanine biosynthesis. In terms of biological role, catalyzes the ATP-dependent conversion of 7-carboxy-7-deazaguanine (CDG) to 7-cyano-7-deazaguanine (preQ(0)). This chain is 7-cyano-7-deazaguanine synthase, found in Thermosynechococcus vestitus (strain NIES-2133 / IAM M-273 / BP-1).